A 97-amino-acid polypeptide reads, in one-letter code: Integration host factor subunit alpha (97 aa).

It belongs to the bacterial histone-like protein family. In terms of assembly, heterodimer of an alpha and a beta chain.

In terms of biological role, this protein is one of the two subunits of integration host factor, a specific DNA-binding protein that functions in genetic recombination as well as in transcriptional and translational control. The polypeptide is Integration host factor subunit alpha (Histophilus somni (strain 2336) (Haemophilus somnus)).